The chain runs to 507 residues: ATP synthase subunit alpha, chloroplastic (507 aa).

Residue 170–177 (GDRQTGKT) participates in ATP binding. Thr-257 carries the post-translational modification Phosphothreonine.

It belongs to the ATPase alpha/beta chains family. As to quaternary structure, F-type ATPases have 2 components, CF(1) - the catalytic core - and CF(0) - the membrane proton channel. CF(1) has five subunits: alpha(3), beta(3), gamma(1), delta(1), epsilon(1). CF(0) has four main subunits: a, b, b' and c.

Its subcellular location is the plastid. It localises to the chloroplast thylakoid membrane. The enzyme catalyses ATP + H2O + 4 H(+)(in) = ADP + phosphate + 5 H(+)(out). Its function is as follows. Produces ATP from ADP in the presence of a proton gradient across the membrane. The alpha chain is a regulatory subunit. The chain is ATP synthase subunit alpha, chloroplastic from Crucihimalaya wallichii (Rock-cress).